Consider the following 502-residue polypeptide: ATP synthase subunit alpha (502 aa).

169–176 serves as a coordination point for ATP; sequence GDRQTGKT.

It belongs to the ATPase alpha/beta chains family. F-type ATPases have 2 components, CF(1) - the catalytic core - and CF(0) - the membrane proton channel. CF(1) has five subunits: alpha(3), beta(3), gamma(1), delta(1), epsilon(1). CF(0) has three main subunits: a(1), b(2) and c(9-12). The alpha and beta chains form an alternating ring which encloses part of the gamma chain. CF(1) is attached to CF(0) by a central stalk formed by the gamma and epsilon chains, while a peripheral stalk is formed by the delta and b chains.

Its subcellular location is the cell membrane. It carries out the reaction ATP + H2O + 4 H(+)(in) = ADP + phosphate + 5 H(+)(out). Produces ATP from ADP in the presence of a proton gradient across the membrane. The alpha chain is a regulatory subunit. The sequence is that of ATP synthase subunit alpha from Exiguobacterium sibiricum (strain DSM 17290 / CCUG 55495 / CIP 109462 / JCM 13490 / 255-15).